Here is a 363-residue protein sequence, read N- to C-terminus: Holliday junction branch migration complex subunit RuvB (363 aa).

Residues 1–32 (MAIQTDSFAAAPAPSSGSTRRLISAAPTSPNE) form a disordered region. The segment covering 7-18 (SFAAAPAPSSGS) has biased composition (low complexity). Residues 13–200 (APSSGSTRRL…FGIVARLEFY (188 aa)) form a large ATPase domain (RuvB-L) region. ATP contacts are provided by residues Leu39, Arg40, Gly81, Lys84, Thr85, Thr86, 147 to 149 (EDY), Arg190, Tyr200, and Arg237. Thr85 provides a ligand contact to Mg(2+). The segment at 201-271 (TPEELVRIVT…IAELALTMLD (71 aa)) is small ATPAse domain (RuvB-S). The head domain (RuvB-H) stretch occupies residues 274–363 (PRGFDVMDRK…GPVGSDLFEG (90 aa)). DNA is bound by residues Arg329 and Arg334.

This sequence belongs to the RuvB family. Homohexamer. Forms an RuvA(8)-RuvB(12)-Holliday junction (HJ) complex. HJ DNA is sandwiched between 2 RuvA tetramers; dsDNA enters through RuvA and exits via RuvB. An RuvB hexamer assembles on each DNA strand where it exits the tetramer. Each RuvB hexamer is contacted by two RuvA subunits (via domain III) on 2 adjacent RuvB subunits; this complex drives branch migration. In the full resolvosome a probable DNA-RuvA(4)-RuvB(12)-RuvC(2) complex forms which resolves the HJ.

It localises to the cytoplasm. The enzyme catalyses ATP + H2O = ADP + phosphate + H(+). In terms of biological role, the RuvA-RuvB-RuvC complex processes Holliday junction (HJ) DNA during genetic recombination and DNA repair, while the RuvA-RuvB complex plays an important role in the rescue of blocked DNA replication forks via replication fork reversal (RFR). RuvA specifically binds to HJ cruciform DNA, conferring on it an open structure. The RuvB hexamer acts as an ATP-dependent pump, pulling dsDNA into and through the RuvAB complex. RuvB forms 2 homohexamers on either side of HJ DNA bound by 1 or 2 RuvA tetramers; 4 subunits per hexamer contact DNA at a time. Coordinated motions by a converter formed by DNA-disengaged RuvB subunits stimulates ATP hydrolysis and nucleotide exchange. Immobilization of the converter enables RuvB to convert the ATP-contained energy into a lever motion, pulling 2 nucleotides of DNA out of the RuvA tetramer per ATP hydrolyzed, thus driving DNA branch migration. The RuvB motors rotate together with the DNA substrate, which together with the progressing nucleotide cycle form the mechanistic basis for DNA recombination by continuous HJ branch migration. Branch migration allows RuvC to scan DNA until it finds its consensus sequence, where it cleaves and resolves cruciform DNA. The polypeptide is Holliday junction branch migration complex subunit RuvB (Leptothrix cholodnii (strain ATCC 51168 / LMG 8142 / SP-6) (Leptothrix discophora (strain SP-6))).